The following is a 263-amino-acid chain: Aquaporin Lacbi1:233199 (263 aa).

Topologically, residues methionine 1–glutamate 17 are cytoplasmic. The helical transmembrane segment at phenylalanine 18–serine 38 threads the bilayer. Residues threonine 39–phenylalanine 44 are Extracellular-facing. The chain crosses the membrane as a helical span at residues leucine 45 to isoleucine 65. The Cytoplasmic segment spans residues serine 66–glutamate 88. The NPA 1 motif lies at asparagine 71–alanine 73. The helical transmembrane segment at valine 89–alanine 109 threads the bilayer. Over asparagine 110–glutamine 143 the chain is Extracellular. Residues valine 144 to leucine 164 form a helical membrane-spanning segment. The Cytoplasmic portion of the chain corresponds to threonine 165–asparagine 174. A helical transmembrane segment spans residues glycine 175 to glutamate 195. Residues threonine 196–glutamine 227 are Extracellular-facing. Positions asparagine 201–alanine 203 match the NPA 2 motif. A helical transmembrane segment spans residues tyrosine 228–tyrosine 248. The Cytoplasmic segment spans residues aspartate 249–arginine 263.

It belongs to the MIP/aquaporin (TC 1.A.8) family.

Its subcellular location is the membrane. It carries out the reaction H2O(in) = H2O(out). Functionally, probable water channel required to facilitate the transport of water across membranes. In Laccaria bicolor (strain S238N-H82 / ATCC MYA-4686) (Bicoloured deceiver), this protein is Aquaporin Lacbi1:233199.